The following is a 75-amino-acid chain: Exodeoxyribonuclease 7 small subunit (75 aa).

Belongs to the XseB family. In terms of assembly, heterooligomer composed of large and small subunits.

It localises to the cytoplasm. The catalysed reaction is Exonucleolytic cleavage in either 5'- to 3'- or 3'- to 5'-direction to yield nucleoside 5'-phosphates.. Its function is as follows. Bidirectionally degrades single-stranded DNA into large acid-insoluble oligonucleotides, which are then degraded further into small acid-soluble oligonucleotides. This Chlamydia caviae (strain ATCC VR-813 / DSM 19441 / 03DC25 / GPIC) (Chlamydophila caviae) protein is Exodeoxyribonuclease 7 small subunit.